A 400-amino-acid chain; its full sequence is MTERNIHVQPASGLAVEDQDIEVVERKGIGHPDTICDGIAETVSRALAQTYIDRFGTVLHYNTDETQLVAGTAAPAYGGGEVLEPIYILVVGRATKKFDGERIPAESIALRAARDYLDEQFPHLDLGSDVIVDVQFGEGSGDLQTVFGEEAAIPMANDTSYGVGHAPLTETEQIVRNTEQKLTGEYAESNPVVGQDVKVMGKREGDHIDVTVAVAMVDEHVPDLDAYKTAVSDVRAFVTDLAEEYTDRDVTVHVNTADDYDAESIYLTTTGTSAEQGDDGSVGRGNRANGLITPNRPMSMEATSGKNPVNHIGKIYNLLSTEIAQSVANEVDGIRQVQMRLLSQIGSPIDEPHVADATVVTEDGVAVGDVEADIQATIDDELADVTDITRQVIEGDLSTF.

ATP is bound at residue 137 to 142 (GEGSGD).

This sequence belongs to the AdoMet synthase 2 family. Mg(2+) serves as cofactor.

It carries out the reaction L-methionine + ATP + H2O = S-adenosyl-L-methionine + phosphate + diphosphate. It participates in amino-acid biosynthesis; S-adenosyl-L-methionine biosynthesis; S-adenosyl-L-methionine from L-methionine: step 1/1. In terms of biological role, catalyzes the formation of S-adenosylmethionine from methionine and ATP. The sequence is that of S-adenosylmethionine synthase from Haloarcula marismortui (strain ATCC 43049 / DSM 3752 / JCM 8966 / VKM B-1809) (Halobacterium marismortui).